A 398-amino-acid polypeptide reads, in one-letter code: Succinate--CoA ligase [ADP-forming] subunit beta (398 aa).

In terms of domain architecture, ATP-grasp spans 9-254; that stretch reads KRLLHEYGAP…TSEEDPKEIE (246 aa). ATP contacts are provided by residues K46, 53 to 55, E109, A112, and E117; that span reads GRG. Mg(2+) is bound by residues N209 and D223. Substrate-binding positions include N274 and 331-333; that span reads GIM.

It belongs to the succinate/malate CoA ligase beta subunit family. In terms of assembly, heterotetramer of two alpha and two beta subunits. Mg(2+) is required as a cofactor.

The enzyme catalyses succinate + ATP + CoA = succinyl-CoA + ADP + phosphate. It catalyses the reaction GTP + succinate + CoA = succinyl-CoA + GDP + phosphate. It functions in the pathway carbohydrate metabolism; tricarboxylic acid cycle; succinate from succinyl-CoA (ligase route): step 1/1. In terms of biological role, succinyl-CoA synthetase functions in the citric acid cycle (TCA), coupling the hydrolysis of succinyl-CoA to the synthesis of either ATP or GTP and thus represents the only step of substrate-level phosphorylation in the TCA. The beta subunit provides nucleotide specificity of the enzyme and binds the substrate succinate, while the binding sites for coenzyme A and phosphate are found in the alpha subunit. In Bartonella henselae (strain ATCC 49882 / DSM 28221 / CCUG 30454 / Houston 1) (Rochalimaea henselae), this protein is Succinate--CoA ligase [ADP-forming] subunit beta.